We begin with the raw amino-acid sequence, 233 residues long: Putative N-acetylmannosamine-6-phosphate 2-epimerase (233 aa).

The protein belongs to the NanE family.

The enzyme catalyses an N-acyl-D-glucosamine 6-phosphate = an N-acyl-D-mannosamine 6-phosphate. It participates in amino-sugar metabolism; N-acetylneuraminate degradation; D-fructose 6-phosphate from N-acetylneuraminate: step 3/5. Its function is as follows. Converts N-acetylmannosamine-6-phosphate (ManNAc-6-P) to N-acetylglucosamine-6-phosphate (GlcNAc-6-P). The protein is Putative N-acetylmannosamine-6-phosphate 2-epimerase of Yersinia pseudotuberculosis serotype O:1b (strain IP 31758).